Consider the following 256-residue polypeptide: MLAKRIIPCLDVTNGRVVKGVNFVELRDAGDPVEIARRYDEQGADEITFLDITATSDGRDLMLHIIEDVASQVFIPLTVGGGVRTVEDVRRLLNAGADKISVNSSAIANPQLVSDATAKYGSQCIVVAIDAKRSSAPGEAPRWEVFTHGGRKATGLDAVEWAREMAARGAGEILLTSMDRDGTKSGFDLELTRAVSDAVPVPVIASGGVGGLQDLADGITRGRADAVLAASIFHYGQHTVGEAKAFMAREGIPVRI.

Active-site residues include aspartate 11 and aspartate 130.

Belongs to the HisA/HisF family. Heterodimer of HisH and HisF.

It is found in the cytoplasm. The catalysed reaction is 5-[(5-phospho-1-deoxy-D-ribulos-1-ylimino)methylamino]-1-(5-phospho-beta-D-ribosyl)imidazole-4-carboxamide + L-glutamine = D-erythro-1-(imidazol-4-yl)glycerol 3-phosphate + 5-amino-1-(5-phospho-beta-D-ribosyl)imidazole-4-carboxamide + L-glutamate + H(+). The protein operates within amino-acid biosynthesis; L-histidine biosynthesis; L-histidine from 5-phospho-alpha-D-ribose 1-diphosphate: step 5/9. In terms of biological role, IGPS catalyzes the conversion of PRFAR and glutamine to IGP, AICAR and glutamate. The HisF subunit catalyzes the cyclization activity that produces IGP and AICAR from PRFAR using the ammonia provided by the HisH subunit. The sequence is that of Imidazole glycerol phosphate synthase subunit HisF from Cupriavidus necator (strain ATCC 17699 / DSM 428 / KCTC 22496 / NCIMB 10442 / H16 / Stanier 337) (Ralstonia eutropha).